A 430-amino-acid polypeptide reads, in one-letter code: L-lysine N6-monooxygenase MbtG (430 aa).

The signal sequence occupies residues 1-21 (MTATLAVIGAGPKAVAVAAKA).

The protein belongs to the lysine N(6)-hydroxylase/L-ornithine N(5)-oxygenase family. FAD is required as a cofactor.

The enzyme catalyses L-lysine + NADPH + O2 = N(6)-hydroxy-L-lysine + NADP(+) + H2O. Its pathway is siderophore biosynthesis; mycobactin biosynthesis. Flavoprotein monooxygenase required for N-hydroxylation of the two acylated lysine residues during mycobactin assembly, thus producing the hydroxamate groups necessary for iron sequestration. Is also able, but less efficiently, to hydroxylate L-lysine (non acylated) in vitro. The protein is L-lysine N6-monooxygenase MbtG (mbtG) of Mycobacterium sp. (strain MCS).